The sequence spans 394 residues: Tryptophan synthase beta chain (394 aa).

At Lys-90 the chain carries N6-(pyridoxal phosphate)lysine.

This sequence belongs to the TrpB family. As to quaternary structure, tetramer of two alpha and two beta chains. It depends on pyridoxal 5'-phosphate as a cofactor.

It carries out the reaction (1S,2R)-1-C-(indol-3-yl)glycerol 3-phosphate + L-serine = D-glyceraldehyde 3-phosphate + L-tryptophan + H2O. It functions in the pathway amino-acid biosynthesis; L-tryptophan biosynthesis; L-tryptophan from chorismate: step 5/5. The beta subunit is responsible for the synthesis of L-tryptophan from indole and L-serine. This is Tryptophan synthase beta chain from Parabacteroides distasonis (strain ATCC 8503 / DSM 20701 / CIP 104284 / JCM 5825 / NCTC 11152).